Here is a 179-residue protein sequence, read N- to C-terminus: Large ribosomal subunit protein uL5 (179 aa).

The protein belongs to the universal ribosomal protein uL5 family. In terms of assembly, part of the 50S ribosomal subunit; part of the 5S rRNA/L5/L18/L25 subcomplex. Contacts the 5S rRNA and the P site tRNA. Forms a bridge to the 30S subunit in the 70S ribosome.

In terms of biological role, this is one of the proteins that bind and probably mediate the attachment of the 5S RNA into the large ribosomal subunit, where it forms part of the central protuberance. In the 70S ribosome it contacts protein S13 of the 30S subunit (bridge B1b), connecting the 2 subunits; this bridge is implicated in subunit movement. Contacts the P site tRNA; the 5S rRNA and some of its associated proteins might help stabilize positioning of ribosome-bound tRNAs. In Alkaliphilus oremlandii (strain OhILAs) (Clostridium oremlandii (strain OhILAs)), this protein is Large ribosomal subunit protein uL5.